The sequence spans 102 residues: Large ribosomal subunit protein bL21 (102 aa).

It belongs to the bacterial ribosomal protein bL21 family. Part of the 50S ribosomal subunit. Contacts protein L20.

Its function is as follows. This protein binds to 23S rRNA in the presence of protein L20. The chain is Large ribosomal subunit protein bL21 from Ehrlichia canis (strain Jake).